The sequence spans 1223 residues: Rho family-interacting cell polarization regulator 1 (1223 aa).

Phosphoserine is present on serine 22. Positions arginine 83 to leucine 112 form a coiled coil. Phosphoserine is present on residues serine 345 and serine 347. The residue at position 351 (threonine 351) is a Phosphothreonine. The segment at asparagine 371 to valine 411 is disordered. 2 stretches are compositionally biased toward low complexity: residues serine 376–serine 391 and proline 399–valine 411. Serine 451, serine 454, and serine 468 each carry phosphoserine. Low complexity-rich tracts occupy residues threonine 566–proline 586 and threonine 595–threonine 655. 2 disordered regions span residues threonine 566–glutamate 771 and phenylalanine 856–serine 887. Over residues glutamine 656–threonine 665 the composition is skewed to polar residues. Residues threonine 673 to threonine 688 are compositionally biased toward low complexity. 2 stretches are compositionally biased toward polar residues: residues isoleucine 693–proline 703 and alanine 725–leucine 741. Serine 748 is modified (phosphoserine). Residues serine 748 to proline 767 show a composition bias toward low complexity. A compositionally biased stretch (acidic residues) spans asparagine 858–glycine 867. Residues proline 868–aspartate 885 show a composition bias toward basic and acidic residues. 2 positions are modified to phosphoserine: serine 874 and serine 875.

It belongs to the RIPOR family. In terms of assembly, interacts (via N-terminus) with RHOA (GTP-bound form); this interaction links active RHOA to STK24 and STK26 kinases. Interacts with RHOB. Interacts with RHOC. Interacts (via C-terminus) with PDCD10; this interaction occurs in a Rho-independent manner. Interacts (via C-terminus) with STK24; this interaction occurs in a PDCD10-dependent and Rho-independent manner. Interacts (via C-terminus) with STK26; this interaction occurs in a PDCD10-dependent and Rho-independent manner. Interacts (via N-terminus) with 14-3-3 proteins; these interactions occur in a Rho-dependent manner. As to expression, expressed in the kidney exclusively by glomerular podocytes.

The protein localises to the cytoplasm. The protein resides in the golgi apparatus. In terms of biological role, downstream effector protein for Rho-type small GTPases that plays a role in cell polarity and directional migration. Acts as an adapter protein, linking active Rho proteins to STK24 and STK26 kinases, and hence positively regulates Golgi reorientation in polarized cell migration upon Rho activation. Involved in the subcellular relocation of STK26 from the Golgi to cytoplasm punctae in a Rho- and PDCD10-dependent manner upon serum stimulation. In Mus musculus (Mouse), this protein is Rho family-interacting cell polarization regulator 1.